Here is a 216-residue protein sequence, read N- to C-terminus: Protein Syd (216 aa).

It belongs to the Syd family.

It localises to the cell inner membrane. Interacts with the SecY protein in vivo. May bind preferentially to an uncomplexed state of SecY, thus functioning either as a chelating agent for excess SecY in the cell or as a regulatory factor that negatively controls the translocase function. This Shewanella baltica (strain OS155 / ATCC BAA-1091) protein is Protein Syd.